A 305-amino-acid chain; its full sequence is RxLR effector protein PexRD25 (305 aa).

The N-terminal stretch at Met-1–Ala-16 is a signal peptide. Residues Arg-44–Arg-56 carry the RxLR-dEER motif.

This sequence belongs to the RxLR effector family.

It is found in the secreted. The protein localises to the host nucleus. The protein resides in the host nucleolus. Its function is as follows. Effector that enhances P.infestans colonization of Nicotiana benthamiana leaves. The polypeptide is RxLR effector protein PexRD25 (Phytophthora infestans (strain T30-4) (Potato late blight agent)).